A 291-amino-acid polypeptide reads, in one-letter code: ATP synthase gamma chain (291 aa).

Belongs to the ATPase gamma chain family. In terms of assembly, F-type ATPases have 2 components, CF(1) - the catalytic core - and CF(0) - the membrane proton channel. CF(1) has five subunits: alpha(3), beta(3), gamma(1), delta(1), epsilon(1). CF(0) has three main subunits: a, b and c.

Its subcellular location is the cell inner membrane. In terms of biological role, produces ATP from ADP in the presence of a proton gradient across the membrane. The gamma chain is believed to be important in regulating ATPase activity and the flow of protons through the CF(0) complex. The protein is ATP synthase gamma chain of Cupriavidus necator (strain ATCC 17699 / DSM 428 / KCTC 22496 / NCIMB 10442 / H16 / Stanier 337) (Ralstonia eutropha).